Reading from the N-terminus, the 96-residue chain is Fluoride-specific ion channel FluC 1 (96 aa).

2 helical membrane passes run 4–24 (LIQGLGVGAGAALGVCVRLAL) and 26–46 (LWLGDSAWPILTINVLGAFLM). Residues G61 and T64 each contribute to the Na(+) site. The helical transmembrane segment at 69 to 89 (MMLNDVSFYFFTAVGCILAWL) threads the bilayer.

The protein belongs to the fluoride channel Fluc/FEX (TC 1.A.43) family.

The protein localises to the cell membrane. The catalysed reaction is fluoride(in) = fluoride(out). Its activity is regulated as follows. Na(+) is not transported, but it plays an essential structural role and its presence is essential for fluoride channel function. In terms of biological role, fluoride-specific ion channel. Important for reducing fluoride concentration in the cell, thus reducing its toxicity. The protein is Fluoride-specific ion channel FluC 1 of Corynebacterium glutamicum (strain ATCC 13032 / DSM 20300 / JCM 1318 / BCRC 11384 / CCUG 27702 / LMG 3730 / NBRC 12168 / NCIMB 10025 / NRRL B-2784 / 534).